A 242-amino-acid chain; its full sequence is E3 ubiquitin-protein ligase ZNRF2 (242 aa).

A disordered region spans residues 1–141 (MGAKQSGPAA…VGGSPGGPRL (141 aa)). Gly2 is lipidated: N-myristoyl glycine. Residues Ser19, Ser21, and Ser25 each carry the phosphoserine modification. The segment covering 19-29 (SGSDLPSSSSG) has biased composition (low complexity). Over residues 30 to 41 (GANGTAGGGGGA) the composition is skewed to gly residues. Low complexity predominate over residues 59 to 97 (PSASGGAAAAAAAPAAPAAPRSRSLGGAVGSVASGARAA). Phosphoserine occurs at positions 82, 89, 113, 116, and 135. Over residues 99 to 118 (SPFSIPNSSSGPYGSQDSVH) the composition is skewed to polar residues. A Phosphoserine; by MTOR modification is found at Ser145. Residues Ser151 and Ser193 each carry the phosphoserine modification. The RING-type; atypical zinc-finger motif lies at 199 to 240 (CAICLEELQQGDTIARLPCLCIYHKGCIDEWFEVNRSCPEHP).

Interacts with UBE2N. Interacts with ZNRF1. Interacts (when phosphorylated) with YWHAE. Post-translationally, phosphorylated; leading to binding to YWHAE. Phosphorylated by MTOR at Ser-145 and dephosphorylated by PP6C. Ser-145 phosphorylation stimulates vesicle-to-cytosol translocation. Highly expressed in the brain, with higher expression during development than in adult. Expressed also in mammary glands, testis, colon and kidney.

The protein resides in the endosome membrane. It localises to the lysosome membrane. Its subcellular location is the presynaptic cell membrane. The protein localises to the cytoplasm. The enzyme catalyses S-ubiquitinyl-[E2 ubiquitin-conjugating enzyme]-L-cysteine + [acceptor protein]-L-lysine = [E2 ubiquitin-conjugating enzyme]-L-cysteine + N(6)-ubiquitinyl-[acceptor protein]-L-lysine.. The protein operates within protein modification; protein ubiquitination. Functionally, E3 ubiquitin-protein ligase that plays a role in the establishment and maintenance of neuronal transmission and plasticity. Ubiquitinates the Na(+)/K(+) ATPase alpha-1 subunit/ATP1A1 and thereby influences its endocytosis and/or degradation. Acts also as a positive regulator of mTORC1 activation by amino acids, which functions upstream of the V-ATPase and of Rag-GTPases. In turn, phosphorylation by mTOR leads to its inhibition via targeting to the cytosol allowing a self-regulating feedback mechanism. This Homo sapiens (Human) protein is E3 ubiquitin-protein ligase ZNRF2 (ZNRF2).